We begin with the raw amino-acid sequence, 209 residues long: Small ribosomal subunit protein uS4 (209 aa).

One can recognise an S4 RNA-binding domain in the interval 99–159; sequence SRLDSVCYRM…EKSKAQLRIK (61 aa).

The protein belongs to the universal ribosomal protein uS4 family. As to quaternary structure, part of the 30S ribosomal subunit. Contacts protein S5. The interaction surface between S4 and S5 is involved in control of translational fidelity.

In terms of biological role, one of the primary rRNA binding proteins, it binds directly to 16S rRNA where it nucleates assembly of the body of the 30S subunit. With S5 and S12 plays an important role in translational accuracy. The sequence is that of Small ribosomal subunit protein uS4 from Thiobacillus denitrificans (strain ATCC 25259 / T1).